Here is a 434-residue protein sequence, read N- to C-terminus: UDP-glucuronate 4-epimerase 2 (434 aa).

The next 2 membrane-spanning stretches (helical) occupy residues 32 to 52 (SVAK…IFFY) and 91 to 111 (GVSV…SAAL). An NAD(+)-binding site is contributed by 93-124 (SVLVTGAAGFVGTHVSAALKRRGDGVLGLDNF). Residue Tyr243 is the Proton acceptor of the active site.

This sequence belongs to the NAD(P)-dependent epimerase/dehydratase family. As to quaternary structure, homodimer. As to expression, in roots, leaves, siliques, flowers, pollen and stems.

It is found in the golgi apparatus. It localises to the golgi stack membrane. The enzyme catalyses UDP-alpha-D-glucuronate = UDP-alpha-D-galacturonate. Functionally, involved in the synthesis of the negatively charged monosaccharide that forms the backbone of pectic cell wall components. The polypeptide is UDP-glucuronate 4-epimerase 2 (GAE2) (Arabidopsis thaliana (Mouse-ear cress)).